The sequence spans 165 residues: Nucleotide-binding protein P9301_05061 (165 aa).

This sequence belongs to the YajQ family.

Nucleotide-binding protein. The chain is Nucleotide-binding protein P9301_05061 from Prochlorococcus marinus (strain MIT 9301).